We begin with the raw amino-acid sequence, 607 residues long: ATP-dependent rRNA helicase SPB4 (607 aa).

Residues 7-35 (WDDLEYPIQPWIRSAVDVMGFENMTPVQA) carry the Q motif motif. The Helicase ATP-binding domain occupies 38–224 (IPLFARNKDV…KTGLRNPVKV (187 aa)). An ATP-binding site is contributed by 51 to 58 (SVTGSGKT). Residues 172-175 (DEAD) carry the DEAD box motif. One can recognise a Helicase C-terminal domain in the interval 248 to 404 (KLEQVISIIN…EISLDIVNLP (157 aa)). The disordered stretch occupies residues 527 to 607 (KSELKKKNMS…NGMQGSFDDL (81 aa)). The stretch at 529–565 (ELKKKNMSWSNNTQSKEEKVERRTKMALKRKRIEEEL) forms a coiled coil. 2 stretches are compositionally biased toward basic and acidic residues: residues 543–552 (SKEEKVERRT) and 560–570 (RIEEELSKEAD). Polar residues predominate over residues 587 to 601 (ILQNKKSKNSNNGMQ).

Belongs to the DEAD box helicase family. DDX55/SPB4 subfamily. As to quaternary structure, component of pre-60S ribosomal complexes.

The protein localises to the nucleus. It localises to the nucleolus. It catalyses the reaction ATP + H2O = ADP + phosphate + H(+). In terms of biological role, ATP-binding RNA helicase involved in the biogenesis of 60S ribosomal subunits. Binds 90S pre-ribosomal particles and dissociates from pre-60S ribosomal particles after processing of 27SB pre-rRNA. Required for the normal formation of 18S rRNA through the processing of pre-rRNAs at sites A0, A1 and A2, and the normal formation of 25S and 5.8S rRNAs through the processing of pre-rRNAs at sites C1 and C2. In Vanderwaltozyma polyspora (strain ATCC 22028 / DSM 70294 / BCRC 21397 / CBS 2163 / NBRC 10782 / NRRL Y-8283 / UCD 57-17) (Kluyveromyces polysporus), this protein is ATP-dependent rRNA helicase SPB4.